Reading from the N-terminus, the 303-residue chain is N-acetyl-D-glucosamine kinase (303 aa).

ATP-binding positions include 4–11 (GFDIGGTK) and 133–140 (GVGGGLIF). Residues histidine 157, cysteine 177, cysteine 179, and cysteine 184 each contribute to the Zn(2+) site.

It belongs to the ROK (NagC/XylR) family. NagK subfamily.

The enzyme catalyses N-acetyl-D-glucosamine + ATP = N-acetyl-D-glucosamine 6-phosphate + ADP + H(+). It participates in cell wall biogenesis; peptidoglycan recycling. Catalyzes the phosphorylation of N-acetyl-D-glucosamine (GlcNAc) derived from cell-wall degradation, yielding GlcNAc-6-P. The chain is N-acetyl-D-glucosamine kinase from Escherichia coli O7:K1 (strain IAI39 / ExPEC).